The primary structure comprises 155 residues: 3-hydroxyacyl-[acyl-carrier-protein] dehydratase FabZ (155 aa).

H54 is a catalytic residue.

Belongs to the thioester dehydratase family. FabZ subfamily.

The protein localises to the cytoplasm. It catalyses the reaction a (3R)-hydroxyacyl-[ACP] = a (2E)-enoyl-[ACP] + H2O. In terms of biological role, involved in unsaturated fatty acids biosynthesis. Catalyzes the dehydration of short chain beta-hydroxyacyl-ACPs and long chain saturated and unsaturated beta-hydroxyacyl-ACPs. The protein is 3-hydroxyacyl-[acyl-carrier-protein] dehydratase FabZ of Burkholderia mallei (strain NCTC 10247).